The chain runs to 38 residues: A2-specific pheromone (38 aa).

Cysteine 35 bears the Cysteine methyl ester mark. A lipid anchor (S-farnesyl cysteine) is attached at cysteine 35. Positions 36-38 (LIA) are cleaved as a propeptide — removed in mature form.

It localises to the cell membrane. In terms of biological role, mating pheromone for A2 allele. This is A2-specific pheromone (MFA2) from Mycosarcoma maydis (Corn smut fungus).